The following is a 79-amino-acid chain: Small ribosomal subunit protein bS18 (79 aa).

It belongs to the bacterial ribosomal protein bS18 family. As to quaternary structure, part of the 30S ribosomal subunit. Forms a tight heterodimer with protein bS6.

In terms of biological role, binds as a heterodimer with protein bS6 to the central domain of the 16S rRNA, where it helps stabilize the platform of the 30S subunit. The polypeptide is Small ribosomal subunit protein bS18 (Aster yellows witches'-broom phytoplasma (strain AYWB)).